We begin with the raw amino-acid sequence, 87 residues long: Small ribosomal subunit protein bS20 (87 aa).

The tract at residues Met1–Arg20 is disordered.

This sequence belongs to the bacterial ribosomal protein bS20 family.

Binds directly to 16S ribosomal RNA. This chain is Small ribosomal subunit protein bS20, found in Corynebacterium efficiens (strain DSM 44549 / YS-314 / AJ 12310 / JCM 11189 / NBRC 100395).